The primary structure comprises 149 residues: Cytochrome c-555 (149 aa).

An N-terminal signal peptide occupies residues 1–20; that stretch reads MKRTMIVVTTLLLGAGAVMA. Methionine 32, cysteine 137, cysteine 140, and histidine 141 together coordinate heme c.

As to quaternary structure, monomer. In terms of processing, binds 1 heme c group covalently per subunit.

Its subcellular location is the periplasm. Low-spin monoheme cytochrome. The protein is Cytochrome c-555 (cycC) of Bradyrhizobium diazoefficiens (strain JCM 10833 / BCRC 13528 / IAM 13628 / NBRC 14792 / USDA 110).